The following is a 332-amino-acid chain: 1-acyl-sn-glycerol-3-phosphate acyltransferase CHLREDRAFT_174358 (332 aa).

A helical membrane pass occupies residues 96–116; it reads FLLSLPLFVTMMVMAPLVLAF. Positions 163–168 match the HXXXXD motif motif; sequence HQSFLD. A helical transmembrane segment spans residues 185 to 205; it reads TSNFLIPIIGWSMFLTGHVMI. The EGTR motif motif lies at 235–238; it reads EGTR.

This sequence belongs to the 1-acyl-sn-glycerol-3-phosphate acyltransferase family.

The protein resides in the membrane. The enzyme catalyses a 1-acyl-sn-glycero-3-phosphate + an acyl-CoA = a 1,2-diacyl-sn-glycero-3-phosphate + CoA. Its pathway is phospholipid metabolism; CDP-diacylglycerol biosynthesis; CDP-diacylglycerol from sn-glycerol 3-phosphate: step 2/3. In terms of biological role, converts lysophosphatidic acid (LPA) into phosphatidic acid by incorporating an acyl moiety at the sn-2 position of the glycerol backbone. The chain is 1-acyl-sn-glycerol-3-phosphate acyltransferase CHLREDRAFT_174358 from Chlamydomonas reinhardtii (Chlamydomonas smithii).